The primary structure comprises 377 residues: MFVSIPSIRKTVMSLCAVPLMAACAFAPGMRFDPQRPLDPADNASVPKITQITPDLVRGGQAQVPRENVDVDQLLAKATPYRIGTGDILSIVVWDHPELVFPTQTYSIGSAYDIANFAGTPNVPGYVVSTGGDIQFPYAGVIKVAGRTQNEVRDEITRAIARVVKDPQVTVRVLAYRSQRIYVDGEVKTPGQQSIDDVPMTLVEALNRAGGINVTTGDNSRIRVTRGGKQWVLSMPALMHQGIDPASVLLRGGDIVRVEPREDSKVFVTGEVVRPSTVLPRNGKLTLSEALGEAGGVSPVSSDPRNVYVIRRAAEGEPQVYHLDAKSPVALALAEGFELRPKDVVYVDAGGLVRWSRVINLLVPTATPLIGAAAVAK.

Positions 1 to 23 (MFVSIPSIRKTVMSLCAVPLMAA) are cleaved as a signal peptide. The N-palmitoyl cysteine moiety is linked to residue cysteine 24. Cysteine 24 carries the S-diacylglycerol cysteine lipid modification.

This sequence belongs to the BexD/CtrA/VexA family.

The protein localises to the cell outer membrane. Functionally, probably involved in polymerization and/or export of exopolysaccharide EPS I which functions as a virulence factor. The polypeptide is EPS I polysaccharide export outer membrane protein EpsA (epsA) (Ralstonia solanacearum (Pseudomonas solanacearum)).